The chain runs to 770 residues: Glutamate carboxypeptidase 2 homolog (770 aa).

The Cytoplasmic portion of the chain corresponds to 1-25 (MPYVGVGAQTVSTSLTGAPMVKAYI). The chain crosses the membrane as a helical; Signal-anchor for type II membrane protein span at residues 26-42 (AIAASLIFVFCIAALGV). Residues 43–770 (HHSERKFNKF…CVVNTLRDVI (728 aa)) are Extracellular-facing. 2 N-linked (GlcNAc...) asparagine glycosylation sites follow: Asn-175 and Asn-337. Residues 282-597 (SKKELFKGRT…QYWAELAKTF (316 aa)) are catalytic. Zn(2+) contacts are provided by His-387 and Asp-397. Asn-417 is a glycosylation site (N-linked (GlcNAc...) asparagine). Catalysis depends on Glu-435, which acts as the Nucleophile. The Zn(2+) site is built by Glu-436 and Asp-464. N-linked (GlcNAc...) asparagine glycosylation is found at Asn-469, Asn-546, and Asn-551. His-562 contacts Zn(2+). N-linked (GlcNAc...) asparagine glycosylation is found at Asn-579, Asn-606, and Asn-630.

Belongs to the peptidase M28 family. M28B subfamily. Zn(2+) is required as a cofactor.

It is found in the membrane. It carries out the reaction Release of an unsubstituted, C-terminal glutamyl residue, typically from Ac-Asp-Glu or folylpoly-gamma-glutamates.. In Caenorhabditis elegans, this protein is Glutamate carboxypeptidase 2 homolog.